Reading from the N-terminus, the 350-residue chain is tRNA uridine(34) hydroxylase (350 aa).

The Rhodanese domain occupies D146–L240. The active-site Cysteine persulfide intermediate is the C200.

This sequence belongs to the TrhO family.

It catalyses the reaction uridine(34) in tRNA + AH2 + O2 = 5-hydroxyuridine(34) in tRNA + A + H2O. Catalyzes oxygen-dependent 5-hydroxyuridine (ho5U) modification at position 34 in tRNAs. The chain is tRNA uridine(34) hydroxylase from Shigella sonnei (strain Ss046).